The following is a 447-amino-acid chain: Kynureninase (447 aa).

Pyridoxal 5'-phosphate-binding positions include leucine 106, threonine 107, 134–137 (FPSD), aspartate 220, histidine 223, and tyrosine 245. At lysine 246 the chain carries N6-(pyridoxal phosphate)lysine. Residues tryptophan 275 and asparagine 303 each coordinate pyridoxal 5'-phosphate.

This sequence belongs to the kynureninase family. In terms of assembly, homodimer. Pyridoxal 5'-phosphate is required as a cofactor.

It is found in the cytoplasm. The catalysed reaction is L-kynurenine + H2O = anthranilate + L-alanine + H(+). It catalyses the reaction 3-hydroxy-L-kynurenine + H2O = 3-hydroxyanthranilate + L-alanine + H(+). It participates in amino-acid degradation; L-kynurenine degradation; L-alanine and anthranilate from L-kynurenine: step 1/1. The protein operates within cofactor biosynthesis; NAD(+) biosynthesis; quinolinate from L-kynurenine: step 2/3. Functionally, catalyzes the cleavage of L-kynurenine (L-Kyn) and L-3-hydroxykynurenine (L-3OHKyn) into anthranilic acid (AA) and 3-hydroxyanthranilic acid (3-OHAA), respectively. This Eremothecium gossypii (strain ATCC 10895 / CBS 109.51 / FGSC 9923 / NRRL Y-1056) (Yeast) protein is Kynureninase.